A 456-amino-acid polypeptide reads, in one-letter code: Bifunctional protein GlmU (456 aa).

Positions 1–229 (MLNSAMSVVI…ISETDGVNNR (229 aa)) are pyrophosphorylase. UDP-N-acetyl-alpha-D-glucosamine-binding positions include 11-14 (LAAG), lysine 25, glutamine 76, 81-82 (GT), 103-105 (YGD), glycine 140, glutamate 154, asparagine 169, and asparagine 227. Residue aspartate 105 coordinates Mg(2+). A Mg(2+)-binding site is contributed by asparagine 227. The segment at 230-250 (LQLSRLERIYQAEQAEKLLLS) is linker. Residues 251-456 (GVMLRDPARF…QGWQRPVKKK (206 aa)) are N-acetyltransferase. The UDP-N-acetyl-alpha-D-glucosamine site is built by arginine 333 and lysine 351. The active-site Proton acceptor is the histidine 363. UDP-N-acetyl-alpha-D-glucosamine contacts are provided by tyrosine 366 and asparagine 377. Acetyl-CoA is bound by residues alanine 380, 386–387 (NY), serine 405, alanine 423, and arginine 440.

The protein in the N-terminal section; belongs to the N-acetylglucosamine-1-phosphate uridyltransferase family. This sequence in the C-terminal section; belongs to the transferase hexapeptide repeat family. In terms of assembly, homotrimer. Requires Mg(2+) as cofactor.

Its subcellular location is the cytoplasm. The enzyme catalyses alpha-D-glucosamine 1-phosphate + acetyl-CoA = N-acetyl-alpha-D-glucosamine 1-phosphate + CoA + H(+). The catalysed reaction is N-acetyl-alpha-D-glucosamine 1-phosphate + UTP + H(+) = UDP-N-acetyl-alpha-D-glucosamine + diphosphate. It functions in the pathway nucleotide-sugar biosynthesis; UDP-N-acetyl-alpha-D-glucosamine biosynthesis; N-acetyl-alpha-D-glucosamine 1-phosphate from alpha-D-glucosamine 6-phosphate (route II): step 2/2. Its pathway is nucleotide-sugar biosynthesis; UDP-N-acetyl-alpha-D-glucosamine biosynthesis; UDP-N-acetyl-alpha-D-glucosamine from N-acetyl-alpha-D-glucosamine 1-phosphate: step 1/1. It participates in bacterial outer membrane biogenesis; LPS lipid A biosynthesis. Functionally, catalyzes the last two sequential reactions in the de novo biosynthetic pathway for UDP-N-acetylglucosamine (UDP-GlcNAc). The C-terminal domain catalyzes the transfer of acetyl group from acetyl coenzyme A to glucosamine-1-phosphate (GlcN-1-P) to produce N-acetylglucosamine-1-phosphate (GlcNAc-1-P), which is converted into UDP-GlcNAc by the transfer of uridine 5-monophosphate (from uridine 5-triphosphate), a reaction catalyzed by the N-terminal domain. The chain is Bifunctional protein GlmU from Salmonella paratyphi A (strain ATCC 9150 / SARB42).